A 125-amino-acid chain; its full sequence is MTQRLRIALIAHDQKKDDMVAFARAHEQALSRYDIVATGTTGGLIQDACPSLNIHRVKSGPLGGDQQIGAMIAEGTVEVLIFFIDPLSPLPHDVDVKALTRLGSVYDIPMALNRATAEKLVRALD.

An MGS-like domain is found at 1 to 125; it reads MTQRLRIALI…TAEKLVRALD (125 aa). Substrate-binding positions include His-12, Lys-16, 38-41, and 59-60; these read TGTT and SG. Asp-65 functions as the Proton donor/acceptor in the catalytic mechanism. His-92 provides a ligand contact to substrate.

The protein belongs to the methylglyoxal synthase family.

The enzyme catalyses dihydroxyacetone phosphate = methylglyoxal + phosphate. In terms of biological role, catalyzes the formation of methylglyoxal from dihydroxyacetone phosphate. This Brucella abortus (strain S19) protein is Methylglyoxal synthase.